Here is a 608-residue protein sequence, read N- to C-terminus: MKWVTFISLLLLFSSAYSRGVTRREAHQSEIAHRFNDLGEEHFRGLVLVAFSQYLQQCPFEDHVKLVNEVTEFAKGCVADQSAANCEKSLHELLGDKLCTVASLRDKYGEMADCCEKKEPERNECFLQHKDDNPGFGQLVTPEADAMCTAFHENEQRFLGKYLYEIARRHPYFYAPELLYYAEEYKGVFTECCEAADKAACLTPKVDALREKVLASSAKERLKCASLQKFGERAFKAWSVARLSQKFPKAEFAEISKLVTDLAKIHKECCHGDLLECADDRADLAKYICENQDSISTKLKECCGKPVLEKSHCISEVERDELPADLPPLAVDFVEDKEVCKNYQEAKDVFLGTFLYEYSRRHPEYSVSLLLRLAKEYEATLEKCCATDDPPACYAHVFDEFKPLVEEPHNLVKTNCELFEKLGEYGFQNALLVRYTKKVPQVSTPTLVEVSRSLGKVGSKCCTHPEAERLSCAEDYLSVVLNRLCVLHEKTPVSERVTKCCTESLVNRRPCFSALQVDETYVPKEFSAETFTFHADLCTLPEAEKQIKKQSALVELLKHKPKATEEQLKTVMGDFGSFVDKCCAAEDKEACFAEEGPKLVAAAQAALA.

The N-terminal stretch at M1–S18 is a signal peptide. A propeptide spanning residues R19–R24 is cleaved from the precursor. 3 Albumin domains span residues R19–R210, E211–P403, and L404–A601. H27 is a Cu cation binding site. S29 carries the phosphoserine modification. Ca(2+)-binding residues include E30 and D37. A disulfide bridge links C77 with C86. 2 positions are modified to phosphoserine: S82 and S89. H91 is a Zn(2+) binding site. 6 disulfides stabilise this stretch: C99-C115, C114-C125, C148-C193, C192-C201, C224-C270, and C269-C277. N6-succinyllysine is present on K229. Residue E268 coordinates Ca(2+). 2 residues coordinate Zn(2+): H271 and D273. Ca(2+) contacts are provided by D273, E276, D279, and D283. Disulfide bonds link C289/C303, C302/C313, C340/C385, C384/C393, C416/C462, C461/C472, C485/C501, and C500/C511. S443 is modified (phosphoserine). T444 and T446 each carry phosphothreonine. Position 460 is an N6-succinyllysine (K460). S513 is modified (phosphoserine). 2 disulfide bridges follow: C538-C583 and C582-C591. An N6-methyllysine modification is found at K558. T570 carries the phosphothreonine modification. N6-succinyllysine is present on K588.

Belongs to the ALB/AFP/VDB family. In terms of assembly, interacts with FCGRT; this interaction regulates ALB homeostasis. Interacts with TASOR. In plasma, occurs in a covalently-linked complex with chromophore-bound alpha-1-microglobulin; this interaction does not prevent fatty acid binding to ALB. Phosphorylated by FAM20C in the extracellular medium. As to expression, plasma.

The protein localises to the secreted. Functionally, binds water, Ca(2+), Na(+), K(+), fatty acids, hormones, bilirubin and drugs. Its main function is the regulation of the colloidal osmotic pressure of blood. Major zinc transporter in plasma, typically binds about 80% of all plasma zinc. Major calcium and magnesium transporter in plasma, binds approximately 45% of circulating calcium and magnesium in plasma. Potentially has more than two calcium-binding sites and might additionally bind calcium in a non-specific manner. The shared binding site between zinc and calcium at residue Asp-273 suggests a crosstalk between zinc and calcium transport in the blood. The rank order of affinity is zinc &gt; calcium &gt; magnesium. Binds to the bacterial siderophore enterobactin and inhibits enterobactin-mediated iron uptake of E.coli from ferric transferrin, and may thereby limit the utilization of iron and growth of enteric bacteria such as E.coli. Does not prevent iron uptake by the bacterial siderophore aerobactin. The chain is Albumin (ALB) from Felis catus (Cat).